The primary structure comprises 834 residues: Translation factor GUF1 homolog, mitochondrial (834 aa).

The transit peptide at 1–66 (MKLCGVRSSG…RPLLAEPRRY (66 aa)) directs the protein to the mitochondrion. One can recognise a tr-type G domain in the interval 129–314 (ACIRNVSVVA…HIIDKVPPPC (186 aa)). Residues 138 to 145 (AHVDHGKT), 205 to 209 (DTPGH), and 259 to 262 (TKMD) each bind GTP. Disordered regions lie at residues 363–385 (GAASAPVSTASSVSSGTAPASGG) and 476–507 (TGSPATASRTKPATAAETASSDDASGSGSSSV). A compositionally biased stretch (low complexity) spans 488-507 (ATAAETASSDDASGSGSSSV).

It belongs to the TRAFAC class translation factor GTPase superfamily. Classic translation factor GTPase family. LepA subfamily.

The protein resides in the mitochondrion inner membrane. The catalysed reaction is GTP + H2O = GDP + phosphate + H(+). Its function is as follows. Promotes mitochondrial protein synthesis. May act as a fidelity factor of the translation reaction, by catalyzing a one-codon backward translocation of tRNAs on improperly translocated ribosomes. Binds to mitochondrial ribosomes in a GTP-dependent manner. This is Translation factor GUF1 homolog, mitochondrial from Leishmania infantum.